The chain runs to 497 residues: Xylooligosaccharide oxidase (497 aa).

An N-terminal signal peptide occupies residues Met1–Ala16. Cys30 and Cys79 are joined by a disulfide. N-linked (GlcNAc...) asparagine glycans are attached at residues Asn42 and Asn117. The FAD-binding PCMH-type domain maps to Leu57 to Ala230. Residues His94 to Cys155 constitute a cross-link (6-(S-cysteinyl)-8alpha-(pros-histidyl)-FAD (His-Cys)). Thr154 contributes to the substrate binding site. N-linked (GlcNAc...) asparagine glycans are attached at residues Asn192, Asn233, and Asn245. A substrate-binding site is contributed by Arg272. N-linked (GlcNAc...) asparagine glycosylation is found at Asn289 and Asn307. Substrate is bound by residues Glu412 and Tyr451.

Belongs to the oxygen-dependent FAD-linked oxidoreductase family. Requires FAD as cofactor. In terms of processing, the FAD cofactor is bound via a bicovalent 6-S-cysteinyl, 8alpha-N1-histidyl FAD linkage.

The protein resides in the secreted. It carries out the reaction D-xylobiose + O2 = D-xylobiono-1,5-lactone + H2O2. The catalysed reaction is D-xylotriose + O2 = D-xylotriono-1,5-lactone + H2O2. The enzyme catalyses D-xylotetraose + O2 = D-xylotetraono-1,5-lactone + H2O2. Its function is as follows. Catalyzes the selective oxidation of C1 hydroxyl moieties on mono-, oligo- and polysaccharides with concomitant reduction of molecular oxygen to hydrogen peroxide. This results in the formation of the corresponding lactones, which typically undergo spontaneous hydrolysis. Xylooligosaccharide oxidase is able to oxidize a variety of substrates including D-xylose, D-cellobiose, lactose and arabinose. The enzyme acts primarily on xylooligosaccharides, indicating that it prefers pentose-based oligosaccharides over hexose-based oligosaccharides. The polypeptide is Xylooligosaccharide oxidase (Thermothelomyces thermophilus (strain ATCC 42464 / BCRC 31852 / DSM 1799) (Sporotrichum thermophile)).